A 383-amino-acid chain; its full sequence is Lipid-A-disaccharide synthase (383 aa).

It belongs to the LpxB family.

It carries out the reaction a lipid X + a UDP-2-N,3-O-bis[(3R)-3-hydroxyacyl]-alpha-D-glucosamine = a lipid A disaccharide + UDP + H(+). Its pathway is bacterial outer membrane biogenesis; LPS lipid A biosynthesis. In terms of biological role, condensation of UDP-2,3-diacylglucosamine and 2,3-diacylglucosamine-1-phosphate to form lipid A disaccharide, a precursor of lipid A, a phosphorylated glycolipid that anchors the lipopolysaccharide to the outer membrane of the cell. In Anaeromyxobacter dehalogenans (strain 2CP-C), this protein is Lipid-A-disaccharide synthase.